The sequence spans 197 residues: uncharacterized protein (197 aa).

Helical transmembrane passes span 30-50 (WVAM…VEMA), 61-81 (LVAG…PPLV), 101-121 (LWSV…LGLA), and 130-150 (IGEF…VAML).

Its subcellular location is the cell membrane. This is an uncharacterized protein from Mycobacterium tuberculosis (strain CDC 1551 / Oshkosh).